The chain runs to 517 residues: C-22 sterol desaturase ERG5 (517 aa).

A helical transmembrane segment spans residues 21 to 41 (LAVAKATGSPITTLFTIIFLI). Cys458 lines the heme pocket.

It belongs to the cytochrome P450 family. The cofactor is heme.

The protein localises to the endoplasmic reticulum membrane. The catalysed reaction is 5-dehydroepisterol + NADPH + O2 + H(+) = ergosta-5,7,22,24(28)-tetraen-3beta-ol + NADP(+) + 2 H2O. It participates in steroid metabolism; ergosterol biosynthesis; ergosterol from zymosterol: step 4/5. C-22 sterol desaturase; part of the third module of ergosterol biosynthesis pathway that includes the late steps of the pathway. ERG5 converts 5-dehydroepisterol into ergosta-5,7,22,24(28)-tetraen-3beta-ol by forming the C-22(23) double bond in the sterol side chain. The third module or late pathway involves the ergosterol synthesis itself through consecutive reactions that mainly occur in the endoplasmic reticulum (ER) membrane. Firstly, the squalene synthase ERG9 catalyzes the condensation of 2 farnesyl pyrophosphate moieties to form squalene, which is the precursor of all steroids. Squalene synthase is crucial for balancing the incorporation of farnesyl diphosphate (FPP) into sterol and nonsterol isoprene synthesis. Secondly, the squalene epoxidase ERG1 catalyzes the stereospecific oxidation of squalene to (S)-2,3-epoxysqualene, which is considered to be a rate-limiting enzyme in steroid biosynthesis. Then, the lanosterol synthase ERG7 catalyzes the cyclization of (S)-2,3 oxidosqualene to lanosterol, a reaction that forms the sterol core. In the next steps, lanosterol is transformed to zymosterol through a complex process involving various demethylation, reduction and desaturation reactions. The lanosterol 14-alpha-demethylase ERG11 (also known as CYP51) catalyzes C14-demethylation of lanosterol to produce 4,4'-dimethyl cholesta-8,14,24-triene-3-beta-ol, which is critical for ergosterol biosynthesis. The C-14 reductase ERG24 reduces the C14=C15 double bond of 4,4-dimethyl-cholesta-8,14,24-trienol to produce 4,4-dimethyl-cholesta-8,24-dienol. 4,4-dimethyl-cholesta-8,24-dienol is substrate of the C-4 demethylation complex ERG25-ERG26-ERG27 in which ERG25 catalyzes the three-step monooxygenation required for the demethylation of 4,4-dimethyl and 4alpha-methylsterols, ERG26 catalyzes the oxidative decarboxylation that results in a reduction of the 3-beta-hydroxy group at the C-3 carbon to an oxo group, and ERG27 is responsible for the reduction of the keto group on the C-3. ERG28 has a role as a scaffold to help anchor ERG25, ERG26 and ERG27 to the endoplasmic reticulum and ERG29 regulates the activity of the iron-containing C4-methylsterol oxidase ERG25. Then, the sterol 24-C-methyltransferase ERG6 catalyzes the methyl transfer from S-adenosyl-methionine to the C-24 of zymosterol to form fecosterol. The C-8 sterol isomerase ERG2 catalyzes the reaction which results in unsaturation at C-7 in the B ring of sterols and thus converts fecosterol to episterol. The sterol-C5-desaturase ERG3 then catalyzes the introduction of a C-5 double bond in the B ring to produce 5-dehydroepisterol. The C-22 sterol desaturase ERG5 further converts 5-dehydroepisterol into ergosta-5,7,22,24(28)-tetraen-3beta-ol by forming the C-22(23) double bond in the sterol side chain. Finally, ergosta-5,7,22,24(28)-tetraen-3beta-ol is substrate of the C-24(28) sterol reductase ERG4 to produce ergosterol. The polypeptide is C-22 sterol desaturase ERG5 (Candida albicans (strain SC5314 / ATCC MYA-2876) (Yeast)).